A 255-amino-acid chain; its full sequence is 5'-nucleotidase SurE (255 aa).

A divalent metal cation is bound by residues Asp-8, Asp-9, Ser-40, and Asn-93.

It belongs to the SurE nucleotidase family. The cofactor is a divalent metal cation.

It is found in the cytoplasm. It catalyses the reaction a ribonucleoside 5'-phosphate + H2O = a ribonucleoside + phosphate. Functionally, nucleotidase that shows phosphatase activity on nucleoside 5'-monophosphates. The polypeptide is 5'-nucleotidase SurE (Rhodopseudomonas palustris (strain BisB18)).